Consider the following 652-residue polypeptide: DNA ligase (652 aa).

NAD(+) contacts are provided by residues aspartate 30 to aspartate 34, serine 79 to leucine 80, and glutamate 108. Catalysis depends on lysine 110, which acts as the N6-AMP-lysine intermediate. Residues arginine 131, glutamate 165, lysine 280, and lysine 304 each contribute to the NAD(+) site. The Zn(2+) site is built by cysteine 398, cysteine 401, cysteine 414, and cysteine 419. A BRCT domain is found at alanine 574–alanine 652.

Belongs to the NAD-dependent DNA ligase family. LigA subfamily. Mg(2+) is required as a cofactor. Requires Mn(2+) as cofactor.

The catalysed reaction is NAD(+) + (deoxyribonucleotide)n-3'-hydroxyl + 5'-phospho-(deoxyribonucleotide)m = (deoxyribonucleotide)n+m + AMP + beta-nicotinamide D-nucleotide.. Its function is as follows. DNA ligase that catalyzes the formation of phosphodiester linkages between 5'-phosphoryl and 3'-hydroxyl groups in double-stranded DNA using NAD as a coenzyme and as the energy source for the reaction. It is essential for DNA replication and repair of damaged DNA. The chain is DNA ligase from Sulfurimonas denitrificans (strain ATCC 33889 / DSM 1251) (Thiomicrospira denitrificans (strain ATCC 33889 / DSM 1251)).